We begin with the raw amino-acid sequence, 313 residues long: Olfactory receptor 10P1 (313 aa).

Residues 1–25 (MAGENHTTLPEFLLLGFSDLKALQG) are Extracellular-facing. A glycan (N-linked (GlcNAc...) asparagine) is linked at asparagine 5. The chain crosses the membrane as a helical span at residues 26–46 (PLFWVVLLVYLVTLLGNSLII). Residues 47 to 54 (LLTQVSPA) lie on the Cytoplasmic side of the membrane. Residues 55-75 (LHSPMYFFLRQLSVVELFYTT) traverse the membrane as a helical segment. Topologically, residues 76–100 (DIVPRTLANLGSPHPQAISFQGCAA) are extracellular. A helical membrane pass occupies residues 101-121 (QMYVFIVLGISECCLLTAMAY). The Cytoplasmic portion of the chain corresponds to 122–140 (DRYVAICQPLRYSTLLSPR). A helical membrane pass occupies residues 141-161 (ACMAMVGTSWLTGIITATTHA). At 162–198 (SLIFSLPFRSHPIIPHFLCDILPVLRLASAGKHRSEI) the chain is on the extracellular side. A helical membrane pass occupies residues 199 to 218 (SVMTATIVFIMIPFSLIVTS). Over 219-238 (YIRILGAILAMASTQSRRKV) the chain is Cytoplasmic. A helical transmembrane segment spans residues 239–259 (FSTCSSHLLVVSLFFGTASIT). Topologically, residues 260–272 (YIRPQAGSSVTTD) are extracellular. A helical membrane pass occupies residues 273-293 (RVLSLFYTVITPMLNPIIYTL). The Cytoplasmic portion of the chain corresponds to 294-313 (RNKDVRRALRHLVKRQRPSP).

Belongs to the G-protein coupled receptor 1 family.

The protein resides in the cell membrane. Functionally, odorant receptor. The protein is Olfactory receptor 10P1 (OR10P1) of Homo sapiens (Human).